The primary structure comprises 482 residues: Aspartic proteinase 36 (482 aa).

A signal peptide spans 1-27 (MVTTMDPSRISRIVAVVFVLVIQVVSG). The N-linked (GlcNAc...) asparagine glycan is linked to Asn-32. The region spanning 78–429 (YFTKIKLGSP…DLENEVIGWA (352 aa)) is the Peptidase A1 domain. Residue Asp-96 is part of the active site. N-linked (GlcNAc...) asparagine glycans are attached at residues Asn-178, Asn-204, and Asn-226. Asp-310 is a catalytic residue. A disulfide bond links Cys-347 and Cys-388. N-linked (GlcNAc...) asparagine glycosylation occurs at Asn-432. Residue Ser-456 is the site of GPI-anchor amidated serine attachment. Residues 457–482 (AASSVMNGTLVTLLSILIWVFHSFTS) constitute a propeptide, removed in mature form. Asn-463 carries an N-linked (GlcNAc...) asparagine glycan.

It belongs to the peptidase A1 family. As to expression, highly expressed in pollen and pollen tubes. Mostly expressed in roots, flowers and inflorescence, and at lower levels in stems, seedlings and siliques.

The protein resides in the cell membrane. The protein localises to the cytoplasm. Its subcellular location is the cytosol. Functionally, displays aspartic proteolytic activity. Together with A39, contributes to pollen and ovule development, including the apical cell wall constitution of the growing pollen tubes. This is Aspartic proteinase 36 from Arabidopsis thaliana (Mouse-ear cress).